The sequence spans 199 residues: MIIHNLGIKDYTEIWEQMKEFTATRDSNSCDELWLLEHYPVYTQGQAGKPEHVLNPNSIKIVQSDRGGQVTYHGPGQLVAYVLMDIRRRNLGIRTLVVKLEEILISVLEHYRIPANIRSGAPGVYVGEKKVASIGLRVKNGCTYHGIALNVNMDLSPFLGINPCGFAKMEMTQMSHFHPNIQLEDVSQHFVQYFLTQFK.

The BPL/LPL catalytic domain occupies 27–199 (SNSCDELWLL…FVQYFLTQFK (173 aa)). Residues 66 to 73 (RGGQVTYH), 133 to 135 (SIG), and 146 to 148 (GIA) contribute to the substrate site. The active-site Acyl-thioester intermediate is the Cys164.

The protein belongs to the LipB family.

The protein localises to the cytoplasm. It carries out the reaction octanoyl-[ACP] + L-lysyl-[protein] = N(6)-octanoyl-L-lysyl-[protein] + holo-[ACP] + H(+). Its pathway is protein modification; protein lipoylation via endogenous pathway; protein N(6)-(lipoyl)lysine from octanoyl-[acyl-carrier-protein]: step 1/2. Its function is as follows. Catalyzes the transfer of endogenously produced octanoic acid from octanoyl-acyl-carrier-protein onto the lipoyl domains of lipoate-dependent enzymes. Lipoyl-ACP can also act as a substrate although octanoyl-ACP is likely to be the physiological substrate. The chain is Octanoyltransferase from Legionella pneumophila (strain Paris).